The sequence spans 320 residues: Methionyl-tRNA formyltransferase (320 aa).

Ser-117–Pro-120 lines the (6S)-5,6,7,8-tetrahydrofolate pocket.

This sequence belongs to the Fmt family.

The catalysed reaction is L-methionyl-tRNA(fMet) + (6R)-10-formyltetrahydrofolate = N-formyl-L-methionyl-tRNA(fMet) + (6S)-5,6,7,8-tetrahydrofolate + H(+). Functionally, attaches a formyl group to the free amino group of methionyl-tRNA(fMet). The formyl group appears to play a dual role in the initiator identity of N-formylmethionyl-tRNA by promoting its recognition by IF2 and preventing the misappropriation of this tRNA by the elongation apparatus. The chain is Methionyl-tRNA formyltransferase from Bordetella petrii (strain ATCC BAA-461 / DSM 12804 / CCUG 43448).